Reading from the N-terminus, the 91-residue chain is MPRSLKKGPFIDAHLFAKVETALETNSRKPIKTWSRRSMILPQMVGLTLSVHNGRTHVPVIVSEQMVGHKLGEFAPTRTYRGHGIDKKAKR.

It belongs to the universal ribosomal protein uS19 family.

Its function is as follows. Protein S19 forms a complex with S13 that binds strongly to the 16S ribosomal RNA. The chain is Small ribosomal subunit protein uS19 from Psychrobacter arcticus (strain DSM 17307 / VKM B-2377 / 273-4).